The following is a 463-amino-acid chain: Endoglucanase EG-1 (463 aa).

The signal sequence occupies residues Met1–Ala22. Positions Gln23–Gly397 are catalytic. 4 N-linked (GlcNAc...) asparagine glycosylation sites follow: Asn78, Asn164, Asn204, and Asn208. The active-site Nucleophile is Glu218. Catalysis depends on Glu223, which acts as the Proton donor. A disordered region spans residues Gly390–Gln429. Asn394 carries N-linked (GlcNAc...) asparagine glycosylation. The tract at residues Pro402–Cys427 is linker. Positions Ser408 to Gln429 are enriched in low complexity. Positions Cys427 to Leu463 constitute a CBM1 domain. Cystine bridges form between Cys435-Cys452 and Cys446-Cys462.

This sequence belongs to the glycosyl hydrolase 7 (cellulase C) family.

It localises to the secreted. It carries out the reaction Endohydrolysis of (1-&gt;4)-beta-D-glucosidic linkages in cellulose, lichenin and cereal beta-D-glucans.. The biological conversion of cellulose to glucose generally requires three types of hydrolytic enzymes: (1) Endoglucanases which cut internal beta-1,4-glucosidic bonds; (2) Exocellobiohydrolases that cut the disaccharide cellobiose from the non-reducing end of the cellulose polymer chain; (3) Beta-1,4-glucosidases which hydrolyze the cellobiose and other short cello-oligosaccharides to glucose. This Trichoderma longibrachiatum protein is Endoglucanase EG-1 (egl1).